The sequence spans 213 residues: Ripening-related protein 3 (213 aa).

The N-terminal stretch at 1–32 (MAGAMTMSRRRLSHALLLVLAILPNLAALAVA) is a signal peptide.

It belongs to the kiwellin family.

The protein resides in the secreted. This Oryza sativa subsp. japonica (Rice) protein is Ripening-related protein 3.